A 255-amino-acid polypeptide reads, in one-letter code: Ribonuclease HII (255 aa).

Positions 72 to 255 (AIICGIDEVG…KSFEPIKSLL (184 aa)) constitute an RNase H type-2 domain. Positions 78, 79, and 170 each coordinate a divalent metal cation.

This sequence belongs to the RNase HII family. The cofactor is Mn(2+). Mg(2+) serves as cofactor.

The protein localises to the cytoplasm. The catalysed reaction is Endonucleolytic cleavage to 5'-phosphomonoester.. In terms of biological role, endonuclease that specifically degrades the RNA of RNA-DNA hybrids. This Staphylococcus aureus (strain MSSA476) protein is Ribonuclease HII.